The following is a 265-amino-acid chain: Apolipoprotein A-I (265 aa).

The N-terminal stretch at methionine 1–alanine 18 is a signal peptide. 2 tandem repeats follow at residues leucine 67 to glycine 88 and proline 89 to serine 110. The 10 X approximate tandem repeats stretch occupies residues leucine 67–glutamine 265. Position 109 is a methionine sulfoxide (methionine 109). A 3; half-length repeat occupies lysine 111–glutamine 121. 5 repeat units span residues proline 122–methionine 142, proline 144–serine 165, proline 166–alanine 187, proline 188–glycine 209, and serine 210–lysine 230. Methionine 135 carries the methionine sulfoxide modification. The 9; half-length repeat unit spans residues proline 231–leucine 241. Copy 10 of the repeat occupies proline 242–glutamine 265.

Belongs to the apolipoprotein A1/A4/E family. In terms of assembly, homodimer. Interacts with APOA1BP and CLU. Component of a sperm activating protein complex (SPAP), consisting of APOA1, an immunoglobulin heavy chain, an immunoglobulin light chain and albumin. Interacts with NDRG1. Interacts with SCGB3A2. Interacts with NAXE and YJEFN3. In terms of processing, glycosylated. Post-translationally, palmitoylated. Phosphorylation sites are present in the extracellular medium. In terms of tissue distribution, major protein of plasma HDL, also found in chylomicrons. Synthesized predominantly in the intestine and the liver.

It is found in the secreted. Its function is as follows. Participates in the reverse transport of cholesterol from tissues to the liver for excretion by promoting cholesterol efflux from tissues and by acting as a cofactor for the lecithin cholesterol acyltransferase (LCAT). As part of the SPAP complex, activates spermatozoa motility. This Sus scrofa (Pig) protein is Apolipoprotein A-I (APOA1).